We begin with the raw amino-acid sequence, 674 residues long: DNA ligase (674 aa).

NAD(+)-binding positions include 31 to 35, 80 to 81, and glutamate 110; these read DYEYD and SL. Lysine 112 (N6-AMP-lysine intermediate) is an active-site residue. NAD(+) is bound by residues arginine 133, glutamate 167, lysine 283, and lysine 307. Cysteine 401, cysteine 404, cysteine 419, and cysteine 424 together coordinate Zn(2+). The region spanning 584-673 is the BRCT domain; it reads KVEKIFEGMK…SKDEVKAVLE (90 aa).

The protein belongs to the NAD-dependent DNA ligase family. LigA subfamily. Mg(2+) is required as a cofactor. It depends on Mn(2+) as a cofactor.

The catalysed reaction is NAD(+) + (deoxyribonucleotide)n-3'-hydroxyl + 5'-phospho-(deoxyribonucleotide)m = (deoxyribonucleotide)n+m + AMP + beta-nicotinamide D-nucleotide.. Its function is as follows. DNA ligase that catalyzes the formation of phosphodiester linkages between 5'-phosphoryl and 3'-hydroxyl groups in double-stranded DNA using NAD as a coenzyme and as the energy source for the reaction. It is essential for DNA replication and repair of damaged DNA. The protein is DNA ligase of Clostridioides difficile (strain 630) (Peptoclostridium difficile).